Here is a 332-residue protein sequence, read N- to C-terminus: MNPWRRYSWEIALAALLIFEILAFGLINPRLLDINVLLFSTSDFICIGIVALPLTMVIVSGGMDISFGSTIGLCAITLGVLFQLGMPLPLAIIITLLLGAICGLINAGLIIYTGVNPLVITLGTMYLFGGSALLLSGMAGATGYEGIGGFPTAFTDFANISFLGIPMPLIFFLVCCLFFWLLMHRTHMGRNVFLIGQSARVAQYSAIPVNRTLYTVYAMTGCASAIAAVLLVSYFGSARSDLGASFLMPTITAVVLGGANIYGGSGSIMGSALAALLVGFLQQGLQMAGVPNQISSALSGALLIVVVVGRSVSLHRHQILEWYSRRRNAHQA.

A run of 10 helical transmembrane segments spans residues 7-27 (YSWEIALAALLIFEILAFGLI), 45-65 (ICIGIVALPLTMVIVSGGMDI), 70-90 (TIGLCAITLGVLFQLGMPLPL), 91-111 (AIIITLLLGAICGLINAGLII), 118-138 (LVITLGTMYLFGGSALLLSGM), 162-182 (FLGIPMPLIFFLVCCLFFWLL), 216-236 (VYAMTGCASAIAAVLLVSYFG), 240-260 (SDLGASFLMPTITAVVLGGAN), 261-281 (IYGGSGSIMGSALAALLVGFL), and 288-308 (AGVPNQISSALSGALLIVVVV).

This sequence belongs to the binding-protein-dependent transport system permease family. AraH/RbsC subfamily. In terms of assembly, the complex is composed of two ATP-binding proteins (LsrA), two transmembrane proteins (LsrC and LsrD) and a solute-binding protein (LsrB).

It localises to the cell inner membrane. Functionally, part of the ABC transporter complex LsrABCD involved in autoinducer 2 (AI-2) import. Probably responsible for the translocation of the substrate across the membrane. The protein is Autoinducer 2 import system permease protein LsrD (lsrD) of Salmonella typhi.